Reading from the N-terminus, the 300-residue chain is tRNA dimethylallyltransferase (300 aa).

9-16 provides a ligand contact to ATP; the sequence is GPTASGKT. 11-16 is a binding site for substrate; the sequence is TASGKT. Residues 34–37 are interaction with substrate tRNA; that stretch reads DSQQ.

The protein belongs to the IPP transferase family. As to quaternary structure, monomer. Mg(2+) is required as a cofactor.

It catalyses the reaction adenosine(37) in tRNA + dimethylallyl diphosphate = N(6)-dimethylallyladenosine(37) in tRNA + diphosphate. Catalyzes the transfer of a dimethylallyl group onto the adenine at position 37 in tRNAs that read codons beginning with uridine, leading to the formation of N6-(dimethylallyl)adenosine (i(6)A). The polypeptide is tRNA dimethylallyltransferase (Anaeromyxobacter sp. (strain Fw109-5)).